The sequence spans 93 residues: Large ribosomal subunit protein uL23cz/uL23cy (93 aa).

It belongs to the universal ribosomal protein uL23 family. In terms of assembly, part of the 50S ribosomal subunit.

The protein localises to the plastid. It is found in the chloroplast. Functionally, binds to 23S rRNA. The chain is Large ribosomal subunit protein uL23cz/uL23cy (rpl23-A) from Nymphaea alba (White water-lily).